We begin with the raw amino-acid sequence, 311 residues long: HPr kinase/phosphorylase (311 aa).

Active-site residues include H138 and K159. 153–160 lines the ATP pocket; sequence GDSGIGKS. Residue S160 participates in Mg(2+) binding. The Proton acceptor; for phosphorylation activity. Proton donor; for dephosphorylation activity role is filled by D177. An important for the catalytic mechanism of both phosphorylation and dephosphorylation region spans residues 201–210; the sequence is IEIRGVGIID. E202 contributes to the Mg(2+) binding site. R243 is a catalytic residue. The tract at residues 264–269 is important for the catalytic mechanism of dephosphorylation; it reads PVKTGR.

It belongs to the HPrK/P family. In terms of assembly, homohexamer. It depends on Mg(2+) as a cofactor.

The enzyme catalyses [HPr protein]-L-serine + ATP = [HPr protein]-O-phospho-L-serine + ADP + H(+). It carries out the reaction [HPr protein]-O-phospho-L-serine + phosphate + H(+) = [HPr protein]-L-serine + diphosphate. Functionally, catalyzes the ATP- as well as the pyrophosphate-dependent phosphorylation of a specific serine residue in HPr, a phosphocarrier protein of the phosphoenolpyruvate-dependent sugar phosphotransferase system (PTS). HprK/P also catalyzes the pyrophosphate-producing, inorganic phosphate-dependent dephosphorylation (phosphorolysis) of seryl-phosphorylated HPr (P-Ser-HPr). The two antagonistic activities of HprK/P are regulated by several intracellular metabolites, which change their concentration in response to the absence or presence of rapidly metabolisable carbon sources (glucose, fructose, etc.) in the growth medium. Therefore, by controlling the phosphorylation state of HPr, HPrK/P is a sensor enzyme that plays a major role in the regulation of carbon metabolism and sugar transport: it mediates carbon catabolite repression (CCR), and regulates PTS-catalyzed carbohydrate uptake and inducer exclusion. This is HPr kinase/phosphorylase from Streptococcus pneumoniae serotype 2 (strain D39 / NCTC 7466).